The primary structure comprises 249 residues: DnaJ homolog subfamily C member 5 homolog (249 aa).

The residue at position 12 (Ser12) is a Phosphoserine. The residue at position 13 (Thr13) is a Phosphothreonine. A phosphoserine mark is found at Ser14 and Ser17. Residues 15-84 (GDSLYEILGL…RNIYDNYGSL (70 aa)) form the J domain. A Phosphotyrosine modification is found at Tyr19. The span at 146–162 (HDQYSHLNRPDGNREGN) shows a compositional bias: basic and acidic residues. 2 disordered regions span residues 146 to 177 (HDQY…LEDV) and 218 to 249 (PFTG…NQKY). A compositionally biased stretch (polar residues) spans 227–241 (NENTSLNTTEQTTYT).

In terms of processing, fatty acylated. Heavily palmitoylated in the cysteine string motif. Expressed in wide range of synaptic terminals: embryonic nervous system, larval neuromuscular junctions, adult visual system (neuropil of optic ganglia and terminal of R1-8 photoreceptors) and thoracic neuromuscular junctions. Also expressed in non-neuronal cells: follicle cells, spermatheca, testis and ejaculatory bulb. Low level of expression is found in many neuronal and non-neuronal tissues.

The protein resides in the membrane. Its function is as follows. May have an important role in presynaptic function. The protein is DnaJ homolog subfamily C member 5 homolog of Drosophila melanogaster (Fruit fly).